The chain runs to 133 residues: Hydrogenase maturation factor HypA (133 aa).

H2 lines the Ni(2+) pocket. The Zn(2+) site is built by C73, C75, C105, and C108.

The protein belongs to the HypA/HybF family.

Functionally, involved in the maturation of [NiFe] hydrogenases. Required for nickel insertion into the metal center of the hydrogenase. In Methanosarcina acetivorans (strain ATCC 35395 / DSM 2834 / JCM 12185 / C2A), this protein is Hydrogenase maturation factor HypA.